We begin with the raw amino-acid sequence, 91 residues long: uncharacterized protein (91 aa).

An N-terminal signal peptide occupies residues 1–21 (MKIISKMLVGALALAVTNVYA).

Belongs to the BhsA/McbA family.

Its subcellular location is the periplasm. This is an uncharacterized protein from Escherichia coli (strain K12).